The chain runs to 2179 residues: Voltage-dependent L-type calcium channel subunit alpha-1D (2179 aa).

Disordered stretches follow at residues 1-21, 30-49, and 64-100; these read MMMM…EDHA, TRLP…SKQT, and KAAQ…SSNS. The Cytoplasmic portion of the chain corresponds to 1–126; that stretch reads MMMMMMMKKM…RACISIVEWK (126 aa). Polar residues predominate over residues 38–49; sequence GPTSQPNSSKQT. The span at 82-93 shows a compositional bias: basic residues; it reads QRKRQQYAKSKK. One copy of the I repeat lies at 113–409; the sequence is NPIRRACISI…LVLGVLSGEF (297 aa). A helical transmembrane segment spans residues 127–145; sequence PFDIFILLAIFANCVALAI. Topologically, residues 146 to 163 are extracellular; sequence YIPFPEDDSNSTNHNLEK. A helical membrane pass occupies residues 164–183; sequence VEYAFLIIFTVETFLKIIAY. At 184–195 the chain is on the cytoplasmic side; the sequence is GLLLHPNAYVRN. Residues 196–214 form a helical membrane-spanning segment; sequence GWNLLDFVIVIVGLFSVIL. The Extracellular segment spans residues 215–235; that stretch reads EQLTKETEGGNHSSGKSGGFD. A helical membrane pass occupies residues 236–254; it reads VKALRAFRVLRPLRLVSGV. Topologically, residues 255 to 273 are cytoplasmic; the sequence is PSLQVVLNSIIKAMVPLLH. Residues 274–293 form a helical membrane-spanning segment; it reads IALLVLFVIIIYAIIGLELF. Over 294–381 the chain is Extracellular; that stretch reads IGKMHKTCFF…WVNDAIGWEW (88 aa). A Ca(2+)-binding site is contributed by Glu364. The helical transmembrane segment at 382–406 threads the bilayer; sequence PWVYFVSLIILGSFFVLNLVLGVLS. At 407–543 the chain is on the cytoplasmic side; sequence GEFSKEREKA…RRCRAAVKSV (137 aa). The tract at residues 429 to 446 is binding to the beta subunit; the sequence is QQLEEDLKGYLDWITQAE. The segment at 449-480 is disordered; it reads DPENEEEGGEEGKRNTSMPTSETESVNTENVS. Residues 463-479 show a composition bias toward polar residues; the sequence is NTSMPTSETESVNTENV. An II repeat occupies 529-775; that stretch reads NRFNRRRCRA…VFLAIAVDNL (247 aa). Residues 544–563 traverse the membrane as a helical segment; it reads TFYWLVIVLVFLNTLTISSE. The Extracellular segment spans residues 564–578; that stretch reads HYNQPDWLTQIQDIA. A helical membrane pass occupies residues 579-597; that stretch reads NKVLLALFTCEMLVKMYSL. Topologically, residues 598–605 are cytoplasmic; it reads GLQAYFVS. A helical transmembrane segment spans residues 606-624; sequence LFNRFDCFVVCGGITETIL. At 625 to 634 the chain is on the extracellular side; that stretch reads VELELMSPLG. A helical transmembrane segment spans residues 635 to 653; it reads VSVFRCVRLLRIFKVTRHW. Over 654–672 the chain is Cytoplasmic; it reads TSLSNLVASLLNSMKSIAS. A helical membrane pass occupies residues 673-693; it reads LLLLLFLFIIIFSLLGMQLFG. At 694 to 747 the chain is on the extracellular side; the sequence is GKFNFDETQTKRSTFDNFPQALLTVFQILTGEDWNAVMYDGIMAYGGPSSSGMI. Glu725 is a binding site for Ca(2+). Residues 748 to 772 form a helical membrane-spanning segment; that stretch reads VCIYFIILFICGNYILLNVFLAIAV. Positions 771 to 810 form a coiled coil; sequence AVDNLADAESLNTAQKEEAEEKERKKIARKESLENKKNNK. The Cytoplasmic segment spans residues 773 to 906; it reads DNLADAESLN…VGCHKLINHH (134 aa). Residues 786–810 are compositionally biased toward basic and acidic residues; the sequence is KEEAEEKERKKIARKESLENKKNNK. The segment at 786–870 is disordered; the sequence is KEEAEEKERK…AGPRPRRISE (85 aa). A compositionally biased stretch (polar residues) spans 811–822; the sequence is PEVNQIANSDNK. Residues 845 to 858 are compositionally biased toward acidic residues; the sequence is VGEEEEEEEEDEPE. The III repeat unit spans residues 893 to 1175; the sequence is NPIRVGCHKL…IFVGFVIVTF (283 aa). The helical transmembrane segment at 907 to 925 threads the bilayer; the sequence is IFTNLILVFIMLSSAALAA. Over 926-941 the chain is Extracellular; sequence EDPIRSHSFRNTILGY. A helical membrane pass occupies residues 942-961; that stretch reads FDYAFTAIFTVEILLKMTTF. The Cytoplasmic segment spans residues 962–973; sequence GAFLHKGAFCRN. The helical transmembrane segment at 974-992 threads the bilayer; it reads YFNLLDMLVVGVSLVSFGI. Over 993–998 the chain is Extracellular; the sequence is QSSAIS. Residues 999–1018 traverse the membrane as a helical segment; the sequence is VVKILRVLRVLRPLRAINRA. Residues 1019 to 1037 are Cytoplasmic-facing; that stretch reads KGLKHVVQCVFVAIRTIGN. The helical transmembrane segment at 1038–1057 threads the bilayer; it reads IMIVTTLLQFMFACIGVQLF. The Extracellular segment spans residues 1058–1147; the sequence is KGKFYRCTDE…VGPVYNYRVE (90 aa). The interval 1095 to 1185 is dihydropyridine binding; the sequence is RIWQNSDFNF…QEQGEKEYKN (91 aa). Glu1121 lines the Ca(2+) pocket. The helical transmembrane segment at 1148 to 1168 threads the bilayer; that stretch reads ISIFFIIYIIIVAFFMMNIFV. At 1169–1225 the chain is on the cytoplasmic side; that stretch reads GFVIVTFQEQGEKEYKNCELDKNQRQCVEYALKARPLRRYIPKNPYQYKFWYVVNSS. An IV repeat occupies 1212–1487; that stretch reads NPYQYKFWYV…LFVAVIMDNF (276 aa). The helical transmembrane segment at 1226 to 1244 threads the bilayer; the sequence is PFEYMMFVLIMLNTLCLAM. The Extracellular portion of the chain corresponds to 1245-1259; sequence QHYEQSKMFNDAMDI. A helical transmembrane segment spans residues 1260–1279; it reads LNMVFTGVFTVEMVLKVIAF. Residues 1280 to 1286 lie on the Cytoplasmic side of the membrane; sequence KPKGYFS. A helical membrane pass occupies residues 1287–1308; sequence DAWNTFDSLIVIGSIIDVALSE. Residues 1309-1333 lie on the Extracellular side of the membrane; it reads ADPSESETIPLPTATPGNSEESNRI. The chain crosses the membrane as a helical span at residues 1334–1353; the sequence is SITFFRLFRVMRLVKLLSRG. Over 1354-1372 the chain is Cytoplasmic; sequence EGIRTLLWTFIKSFQALPY. Residues 1373 to 1392 traverse the membrane as a helical segment; the sequence is VALLIAMLFFIYAVIGMQMF. At 1393–1459 the chain is on the extracellular side; that stretch reads GKVAMRDNNQ…GEEYTCGSNF (67 aa). The tract at residues 1440–1506 is dihydropyridine binding; it reads LCDPDSDYNP…LGPHHLDEFK (67 aa). Residues 1452–1495 form a phenylalkylamine binding region; that stretch reads EYTCGSNFAIVYFISFYMLCAFLIINLFVAVIMDNFDYLTRDWS. The helical transmembrane segment at 1460–1484 threads the bilayer; the sequence is AIVYFISFYMLCAFLIINLFVAVIM. The Cytoplasmic segment spans residues 1485–2179; it reads DNFDYLTRDW…ADEMICITTL (695 aa). 3 disordered regions span residues 1704-1789, 1896-1941, and 2135-2171; these read LLGN…AHGK, FERP…RSSF, and GDMG…DLAD. A compositionally biased stretch (polar residues) spans 1764–1782; it reads SIGKQAPTSTNANLNNANM. Acidic residues predominate over residues 2156–2171; it reads SDEEPDPGREEEDLAD.

Belongs to the calcium channel alpha-1 subunit (TC 1.A.1.11) family. CACNA1D subfamily. Voltage-dependent calcium channels are multisubunit complexes, consisting of alpha-1, alpha-2, beta and delta subunits in a 1:1:1:1 ratio. The channel activity is directed by the pore-forming and voltage-sensitive alpha-1 subunit. In many cases, this subunit is sufficient to generate voltage-sensitive calcium channel activity. The auxiliary subunits beta and alpha-2/delta linked by a disulfide bridge regulate the channel activity. Interacts (via IQ domain) with CABP1 and CABP4 in a calcium independent manner. Interacts with RIMBP2. As to expression, expressed in the inner hair cells (IHC) of the cochlea.

It localises to the membrane. It catalyses the reaction Ca(2+)(in) = Ca(2+)(out). In terms of biological role, voltage-sensitive calcium channels (VSCC) mediate the entry of calcium ions into excitable cells and are also involved in a variety of calcium-dependent processes, including muscle contraction, hormone or neurotransmitter release, gene expression, cell motility, cell division and cell death. The isoform alpha-1D gives rise to L-type calcium currents. Long-lasting (L-type) calcium channels belong to the 'high-voltage activated' (HVA) group. They are blocked by dihydropyridines (DHP), phenylalkylamines, and by benzothiazepines. The polypeptide is Voltage-dependent L-type calcium channel subunit alpha-1D (Cacna1d) (Mus musculus (Mouse)).